We begin with the raw amino-acid sequence, 416 residues long: Queuine tRNA-ribosyltransferase accessory subunit 2 (416 aa).

Zn(2+) contacts are provided by cysteine 323, cysteine 325, cysteine 328, and histidine 354.

The protein belongs to the queuine tRNA-ribosyltransferase family. QTRT2 subfamily. In terms of assembly, heterodimer of a catalytic subunit and an accessory subunit. Zn(2+) serves as cofactor.

Its subcellular location is the cytoplasm. In terms of biological role, non-catalytic subunit of the queuine tRNA-ribosyltransferase (TGT) that catalyzes the base-exchange of a guanine (G) residue with queuine (Q) at position 34 (anticodon wobble position) in tRNAs with GU(N) anticodons (tRNA-Asp, -Asn, -His and -Tyr), resulting in the hypermodified nucleoside queuosine (7-(((4,5-cis-dihydroxy-2-cyclopenten-1-yl)amino)methyl)-7-deazaguanosine). The protein is Queuine tRNA-ribosyltransferase accessory subunit 2 of Drosophila mojavensis (Fruit fly).